Consider the following 541-residue polypeptide: Chaperonin GroEL (541 aa).

ATP is bound by residues 29–32, 86–90, Gly-413, and Asp-495; these read TLGP and DGTTT.

This sequence belongs to the chaperonin (HSP60) family. As to quaternary structure, forms a cylinder of 14 subunits composed of two heptameric rings stacked back-to-back. Interacts with the co-chaperonin GroES.

Its subcellular location is the cytoplasm. It catalyses the reaction ATP + H2O + a folded polypeptide = ADP + phosphate + an unfolded polypeptide.. Functionally, together with its co-chaperonin GroES, plays an essential role in assisting protein folding. The GroEL-GroES system forms a nano-cage that allows encapsulation of the non-native substrate proteins and provides a physical environment optimized to promote and accelerate protein folding. In Thermoanaerobacter pseudethanolicus (strain ATCC 33223 / 39E) (Clostridium thermohydrosulfuricum), this protein is Chaperonin GroEL.